The primary structure comprises 416 residues: S-adenosylmethionine synthase (416 aa).

ATP is bound at residue histidine 14. Aspartate 16 lines the Mg(2+) pocket. Glutamate 42 is a binding site for K(+). L-methionine-binding residues include glutamate 55 and glutamine 98. Residues 98 to 108 are flexible loop; the sequence is QSPDIARGVDT. Residues 173-175, 249-250, aspartate 258, 264-265, alanine 281, and lysine 285 contribute to the ATP site; these read DGK, KF, and RK. Position 258 (aspartate 258) interacts with L-methionine. Lysine 289 contacts L-methionine.

This sequence belongs to the AdoMet synthase family. Homotetramer; dimer of dimers. Mg(2+) serves as cofactor. The cofactor is K(+).

The protein resides in the cytoplasm. The enzyme catalyses L-methionine + ATP + H2O = S-adenosyl-L-methionine + phosphate + diphosphate. It participates in amino-acid biosynthesis; S-adenosyl-L-methionine biosynthesis; S-adenosyl-L-methionine from L-methionine: step 1/1. Catalyzes the formation of S-adenosylmethionine (AdoMet) from methionine and ATP. The overall synthetic reaction is composed of two sequential steps, AdoMet formation and the subsequent tripolyphosphate hydrolysis which occurs prior to release of AdoMet from the enzyme. This Thermosynechococcus vestitus (strain NIES-2133 / IAM M-273 / BP-1) protein is S-adenosylmethionine synthase.